A 367-amino-acid chain; its full sequence is UDP-N-acetylglucosamine--N-acetylmuramyl-(pentapeptide) pyrophosphoryl-undecaprenol N-acetylglucosamine transferase (367 aa).

Residues 18–20, Asn130, Arg170, Ser196, Ile252, 271–276, and Gln297 contribute to the UDP-N-acetyl-alpha-D-glucosamine site; these read TGG and ALTVSE.

It belongs to the glycosyltransferase 28 family. MurG subfamily.

It localises to the cell inner membrane. It carries out the reaction di-trans,octa-cis-undecaprenyl diphospho-N-acetyl-alpha-D-muramoyl-L-alanyl-D-glutamyl-meso-2,6-diaminopimeloyl-D-alanyl-D-alanine + UDP-N-acetyl-alpha-D-glucosamine = di-trans,octa-cis-undecaprenyl diphospho-[N-acetyl-alpha-D-glucosaminyl-(1-&gt;4)]-N-acetyl-alpha-D-muramoyl-L-alanyl-D-glutamyl-meso-2,6-diaminopimeloyl-D-alanyl-D-alanine + UDP + H(+). Its pathway is cell wall biogenesis; peptidoglycan biosynthesis. Its function is as follows. Cell wall formation. Catalyzes the transfer of a GlcNAc subunit on undecaprenyl-pyrophosphoryl-MurNAc-pentapeptide (lipid intermediate I) to form undecaprenyl-pyrophosphoryl-MurNAc-(pentapeptide)GlcNAc (lipid intermediate II). In Shewanella frigidimarina (strain NCIMB 400), this protein is UDP-N-acetylglucosamine--N-acetylmuramyl-(pentapeptide) pyrophosphoryl-undecaprenol N-acetylglucosamine transferase.